The chain runs to 396 residues: Tryptophan synthase beta chain (396 aa).

Lysine 86 is modified (N6-(pyridoxal phosphate)lysine).

It belongs to the TrpB family. Tetramer of two alpha and two beta chains. Pyridoxal 5'-phosphate serves as cofactor.

It catalyses the reaction (1S,2R)-1-C-(indol-3-yl)glycerol 3-phosphate + L-serine = D-glyceraldehyde 3-phosphate + L-tryptophan + H2O. It participates in amino-acid biosynthesis; L-tryptophan biosynthesis; L-tryptophan from chorismate: step 5/5. Functionally, the beta subunit is responsible for the synthesis of L-tryptophan from indole and L-serine. This is Tryptophan synthase beta chain from Erwinia tasmaniensis (strain DSM 17950 / CFBP 7177 / CIP 109463 / NCPPB 4357 / Et1/99).